The following is a 333-amino-acid chain: Glycerol-3-phosphate dehydrogenase [NAD(P)+] (333 aa).

NADPH is bound by residues phenylalanine 19, arginine 40, arginine 41, and lysine 113. Sn-glycerol 3-phosphate is bound by residues lysine 113 and glycine 141. Alanine 145 lines the NADPH pocket. Sn-glycerol 3-phosphate is bound by residues lysine 196, aspartate 249, serine 259, arginine 260, and asparagine 261. Lysine 196 functions as the Proton acceptor in the catalytic mechanism. Arginine 260 is an NADPH binding site. Residues valine 282 and glutamate 283 each contribute to the NADPH site.

This sequence belongs to the NAD-dependent glycerol-3-phosphate dehydrogenase family.

It localises to the cytoplasm. It catalyses the reaction sn-glycerol 3-phosphate + NAD(+) = dihydroxyacetone phosphate + NADH + H(+). The enzyme catalyses sn-glycerol 3-phosphate + NADP(+) = dihydroxyacetone phosphate + NADPH + H(+). The protein operates within membrane lipid metabolism; glycerophospholipid metabolism. Catalyzes the reduction of the glycolytic intermediate dihydroxyacetone phosphate (DHAP) to sn-glycerol 3-phosphate (G3P), the key precursor for phospholipid synthesis. The sequence is that of Glycerol-3-phosphate dehydrogenase [NAD(P)+] from Sinorhizobium fredii (strain NBRC 101917 / NGR234).